Here is a 222-residue protein sequence, read N- to C-terminus: Thiol:disulfide interchange protein DsbL (222 aa).

An N-terminal signal peptide occupies residues 1-27; sequence MSAKWINSIFKSVVLTAALALPFTASA. The region spanning 28–221 is the Thioredoxin domain; the sequence is FTEGTDYMVL…MAQLVRELAT (194 aa). Residues Cys-56 and Cys-59 are joined by a disulfide bond.

The protein belongs to the thioredoxin family. DsbL subfamily. In terms of assembly, interacts with DsbI.

The protein resides in the periplasm. Functionally, involved in disulfide-bond formation. Acts by transferring its disulfide bond to other proteins. Part of a redox system composed of DsbI and DsbL that mediates formation of an essential disulfide bond in AssT. The polypeptide is Thiol:disulfide interchange protein DsbL (Lelliottia amnigena (Enterobacter amnigenus)).